A 417-amino-acid polypeptide reads, in one-letter code: UDP-N-acetylglucosamine 1-carboxyvinyltransferase (417 aa).

22–23 (KN) serves as a coordination point for phosphoenolpyruvate. Residue arginine 92 coordinates UDP-N-acetyl-alpha-D-glucosamine. The active-site Proton donor is the cysteine 116. Cysteine 116 is subject to 2-(S-cysteinyl)pyruvic acid O-phosphothioketal. 2 residues coordinate UDP-N-acetyl-alpha-D-glucosamine: aspartate 304 and isoleucine 326.

The protein belongs to the EPSP synthase family. MurA subfamily.

The protein resides in the cytoplasm. The catalysed reaction is phosphoenolpyruvate + UDP-N-acetyl-alpha-D-glucosamine = UDP-N-acetyl-3-O-(1-carboxyvinyl)-alpha-D-glucosamine + phosphate. It functions in the pathway cell wall biogenesis; peptidoglycan biosynthesis. In terms of biological role, cell wall formation. Adds enolpyruvyl to UDP-N-acetylglucosamine. In Geotalea uraniireducens (strain Rf4) (Geobacter uraniireducens), this protein is UDP-N-acetylglucosamine 1-carboxyvinyltransferase.